The primary structure comprises 405 residues: Phosphoglycerate kinase (405 aa).

Substrate-binding positions include 24–26, R40, 63–66, R122, and R162; these read DFN and HLGR. Residues K212, E331, and 361-364 each bind ATP; that span reads GGDS.

Belongs to the phosphoglycerate kinase family. As to quaternary structure, monomer.

Its subcellular location is the cytoplasm. The enzyme catalyses (2R)-3-phosphoglycerate + ATP = (2R)-3-phospho-glyceroyl phosphate + ADP. It participates in carbohydrate degradation; glycolysis; pyruvate from D-glyceraldehyde 3-phosphate: step 2/5. This chain is Phosphoglycerate kinase, found in Corynebacterium aurimucosum (strain ATCC 700975 / DSM 44827 / CIP 107346 / CN-1) (Corynebacterium nigricans).